The following is a 227-amino-acid chain: UPF0758 protein Dhaf_4352 (227 aa).

An MPN domain is found at 105–227; it reads VINSPQDIAH…YISLKERGIL (123 aa). Histidine 176, histidine 178, and aspartate 189 together coordinate Zn(2+). The short motif at 176–189 is the JAMM motif element; that stretch reads HNHPSGDPTPSSED.

The protein belongs to the UPF0758 family.

This is UPF0758 protein Dhaf_4352 from Desulfitobacterium hafniense (strain DSM 10664 / DCB-2).